Reading from the N-terminus, the 582-residue chain is METESGNQEKVMEEESTEKKKEVEKKKRSRVKQVLADIAKQVDFWFGDANLHKDRFLREQIEKSRDGYVDISLLVSFNKMKKLTTDGKLIARALRSSAVVELDLEGTRIRRKKPLGERPKDEDERTVYVELLPKNVNHSWIERVFGKCGNVVYISIPHYKSTGDPKGFAFVEFETKEQAAKAIEFLNNPPEEAPRKPGIFPKTVKNKPIPALRVVEEKKKKKKKKGRMKKEDNIQAKEENMDTSNTSISKMKRSRPTSEGSDIESTEPQKQCSKKKKKRDRVEASSLPEVRTGKRKRSSSEDAESLAPRSKVKKIIQKDIIKEASEASKENRDIEISTEEEKDTGDLKDSSLLKTKRKHKKKHKERHKMGEEVIPLRVLSKSEWMDLKKEYLALQKASMASLKKTISQIKSESEMETDSGVPQNTGMKNEKTANREECRTQEKVNATGPQFVSGVIVKIISTEPLPGRKQVRDTLAAISEVLYVDLLEGDTECHARFKTPEDAQAVINAYTEINKKHCWKLEILSGDHEQRYWQKILVDRQAKLNQPREKKRGTEKLITKAEKIRLAKTQQASKHIRFSEYD.

N-acetylmethionine is present on Met-1. The disordered stretch occupies residues 1-27 (METESGNQEKVMEEESTEKKKEVEKKK). The segment covering 10-25 (KVMEEESTEKKKEVEK) has biased composition (basic and acidic residues). The region spanning 28–122 (RSRVKQVLAD…KPLGERPKDE (95 aa)) is the HTH La-type RNA-binding domain. Positions 125–203 (RTVYVELLPK…PRKPGIFPKT (79 aa)) constitute an RRM domain. Disordered regions lie at residues 188-368 (NPPE…ERHK) and 410-442 (KSESEMETDSGVPQNTGMKNEKTANREECRTQE). Positions 219-228 (KKKKKKKGRM) are enriched in basic residues. Over residues 229–240 (KKEDNIQAKEEN) the composition is skewed to basic and acidic residues. A Glycyl lysine isopeptide (Lys-Gly) (interchain with G-Cter in SUMO2) cross-link involves residue Lys-237. Phosphothreonine is present on Thr-257. Residues Ser-258, Ser-261, Ser-273, Ser-298, Ser-299, and Ser-300 each carry the phosphoserine modification. The segment covering 316-335 (IQKDIIKEASEASKENRDIE) has biased composition (basic and acidic residues). Ser-337 carries the phosphoserine modification. A Phosphothreonine modification is found at Thr-338. The residue at position 351 (Ser-351) is a Phosphoserine. The segment covering 354–367 (KTKRKHKKKHKERH) has biased composition (basic residues). A Glycyl lysine isopeptide (Lys-Gly) (interchain with G-Cter in SUMO2) cross-link involves residue Lys-410. The segment covering 428–442 (KNEKTANREECRTQE) has biased composition (basic and acidic residues). The 114-residue stretch at 450 to 563 (QFVSGVIVKI…TEKLITKAEK (114 aa)) folds into the xRRM domain.

Belongs to the LARP7 family. Core component of the 7SK RNP complex, at least composed of 7SK RNA, LARP7, MEPCE, HEXIM1 (or HEXIM2) and P-TEFb (composed of CDK9 and CCNT1/cyclin-T1). Interacts with METTL16. Interacts with RBM7; upon genotoxic stress this interaction is enhanced, triggering the release of inactive P-TEFb complex from the core, yielding to P-TEFb complex activation. Associates with box C/D small nucleolar ribonucleoprotein (snoRNP) complexes.

The protein resides in the nucleus. Its subcellular location is the nucleoplasm. In terms of biological role, RNA-binding protein that specifically binds distinct small nuclear RNA (snRNAs) and regulates their processing and function. Specifically binds the 7SK snRNA (7SK RNA) and acts as a core component of the 7SK ribonucleoprotein (RNP) complex, thereby acting as a negative regulator of transcription elongation by RNA polymerase II. The 7SK RNP complex sequesters the positive transcription elongation factor b (P-TEFb) in a large inactive 7SK RNP complex preventing RNA polymerase II phosphorylation and subsequent transcriptional elongation. The 7SK RNP complex also promotes snRNA gene transcription by RNA polymerase II via interaction with the little elongation complex (LEC). LARP7 specifically binds to the highly conserved 3'-terminal U-rich stretch of 7SK RNA; on stimulation, remains associated with 7SK RNA, whereas P-TEFb is released from the complex. LARP7 also acts as a regulator of mRNA splicing fidelity by promoting U6 snRNA processing. Specifically binds U6 snRNAs and associates with a subset of box C/D RNP complexes: promotes U6 snRNA 2'-O-methylation by facilitating U6 snRNA loading into box C/D RNP complexes. U6 snRNA 2'-O-methylation is required for mRNA splicing fidelity. Binds U6 snRNAs with a 5'-CAGGG-3' sequence motif. U6 snRNA processing is required for spermatogenesis. This chain is La-related protein 7, found in Homo sapiens (Human).